Here is a 632-residue protein sequence, read N- to C-terminus: MTQSTTSHYYVESPSSRALVVGAIGVVFGDIGTSPLYSLKECFSPEHGIPFSPDAVLGIISMLFWAFVIVVSLKYVMFVMRADNNGEGGILALMALALRTAAPRSRMAKLIMMFGIFGACMFYGDAVITPAISVLSAVEGLEIAAPGLSHFVIPITLLILALLFFIQRSGTHVVGKLFGPIMVVWFLALGALGLIHLVQAPGIVKAINPVYAVSFLHDHSLQAFIVLGSVFLVLTGAEALYADMGHFGAKPIRTAWFVLVMPCLILNYFGQGAMLLGNPDAIENPFYLMVPSALQLPMVLLATAATVIASQAVISGAFSLTSQAIQLGFMPRMRIRYTSAAEIGQIYMPVINWILLVLVICVVLAFKKSDNLAAAYGIAVTTTMVITTFLAALVMRNVWKWNPALVTLISLTFLVVDMSFFAANLLKIAEGGWFPLLMGGSAFFLLMTWHSGRKLLRARSLEDGIPLEPFIAGLLAHPPHRVEGTAVFLTGNTESVPVSLLHNLKHNRVLHERVVFLQFVTRDIPYVDDDERLSCKDLGGGVYILKSEYGFKETPDVQRVLDLAQRKLGMQFELMETSFFIARESVIPSKLPGMSMWRESLFAWMHQNGAKPSDFFSIPANRVVELGTKVEI.

Transmembrane regions (helical) follow at residues 19–39 (LVVG…LYSL), 59–79 (IISM…VMFV), 110–130 (LIMM…VITP), 146–166 (PGLS…LFFI), 178–198 (FGPI…IHLV), 221–241 (LQAF…EALY), 256–276 (WFVL…AMLL), 298–318 (MVLL…SGAF), 346–366 (IYMP…VLAF), 375–395 (AYGI…ALVM), 403–423 (PALV…FFAA), and 428–448 (IAEG…LLMT).

The protein belongs to the HAK/KUP transporter (TC 2.A.72) family.

Its subcellular location is the cell inner membrane. The enzyme catalyses K(+)(in) + H(+)(in) = K(+)(out) + H(+)(out). Transport of potassium into the cell. Likely operates as a K(+):H(+) symporter. The polypeptide is Probable potassium transport system protein Kup (Cupriavidus metallidurans (strain ATCC 43123 / DSM 2839 / NBRC 102507 / CH34) (Ralstonia metallidurans)).